A 552-amino-acid chain; its full sequence is Urocanate hydratase (552 aa).

Residues 48 to 49 (GG), Q126, 172 to 174 (GMG), E192, R197, 238 to 239 (NA), 259 to 263 (QTSAH), 269 to 270 (YV), and Y318 each bind NAD(+). C406 is a catalytic residue. Residue G488 participates in NAD(+) binding.

This sequence belongs to the urocanase family. Requires NAD(+) as cofactor.

The protein localises to the cytoplasm. The catalysed reaction is 4-imidazolone-5-propanoate = trans-urocanate + H2O. Its pathway is amino-acid degradation; L-histidine degradation into L-glutamate; N-formimidoyl-L-glutamate from L-histidine: step 2/3. Its function is as follows. Catalyzes the conversion of urocanate to 4-imidazolone-5-propionate. The protein is Urocanate hydratase of Herpetosiphon aurantiacus (strain ATCC 23779 / DSM 785 / 114-95).